We begin with the raw amino-acid sequence, 603 residues long: MRFLLTKRAFRIFNPRFQRLWLTSSPFSSTSNSGGFPDDSEPESWRTIEGLLRSPANFSPLSPITFLERSAKVYRDRTSLVFGSVKHTWFQTYQRCLRLASALTNLGISRGDVVAALAPNVPAMHELHFAVPMAGLILCPLNTRLDPSTLSVLLAHSEAKILFVDHQLLEIAHGALDLLAKSDKTRKSLKLVLISQSNDDDDSDEDSSSTFASKYSFDYEYETLLKSGDSEFEIIKPRCEWDPISINYTSGTTSRPKGVVYSHRGAYLNSLATVFLHQMSVYPVYLWTVPMFHCNGWCLVWGVAAQGGTNICLRKVSPKMIFKNIAMHKVTHMGGAPTVLNMIVNYTVTEHKPLPHRVEIMTGGSPPLPQILAKMEELGFNVSHLYGLTETYGPGTHCVWKPEWDSLSLEERTKLKARQGVQHLGLEGLDVKDPLTMETVPDDGLTMGEVMFRGNTVMSGYFKDIEATRKAFEGDWFHSGDLAVKYPDGYIEIKDRLKDVIISGGENISSVEVERVLCSHQAVLEAAVVARPDHHWGQTPCGFVKLKEGFDTIKPEEIIGFCRDHLPHYMAPKTIVFGDIPKTSTGKVQKYLLRKKADEMGSL.

This sequence belongs to the ATP-dependent AMP-binding enzyme family. Expressed at low levels in leaves, flowers and developing seeds.

The catalysed reaction is 3-methylbutanoate + ATP + CoA = 3-methylbutanoyl-CoA + AMP + diphosphate. It carries out the reaction hexanoate + ATP + CoA = hexanoyl-CoA + AMP + diphosphate. It catalyses the reaction butanoate + ATP + CoA = butanoyl-CoA + AMP + diphosphate. The enzyme catalyses pentanoate + ATP + CoA = pentanoyl-CoA + AMP + diphosphate. The catalysed reaction is 3-methylpentanoate + ATP + CoA = 3-methylpentanoyl-CoA + AMP + diphosphate. It carries out the reaction 4-methylpentanoate + ATP + CoA = 4-methylpentanoyl-CoA + AMP + diphosphate. Its function is as follows. Catalyzes the ligation of CoA on isovalerate to produce 3-methylbutanoyl-CoA. Can also use butanoate, pentanoate, hexanoate, 3-methylpentanoate and 4-methylpentanoate as substrates with a lower efficiency. This Arabidopsis thaliana (Mouse-ear cress) protein is Isovalerate--CoA ligase AAE2.